The sequence spans 137 residues: Neutral phospholipase A2 ammodytin I2 (137 aa).

A signal peptide spans 1–16; the sequence is MRTLWIVAVCLIGVEG. 7 cysteine pairs are disulfide-bonded: C42-C131, C44-C60, C59-C111, C65-C137, C66-C104, C73-C97, and C91-C102. Ca(2+)-binding residues include Y43, G45, and G47. The active site involves H63. D64 serves as a coordination point for Ca(2+). Residue D105 is part of the active site.

Belongs to the phospholipase A2 family. Group II subfamily. D49 sub-subfamily. Requires Ca(2+) as cofactor. Expressed by the venom gland.

The protein resides in the secreted. The catalysed reaction is a 1,2-diacyl-sn-glycero-3-phosphocholine + H2O = a 1-acyl-sn-glycero-3-phosphocholine + a fatty acid + H(+). Functionally, snake venom phospholipase A2 (PLA2) that has enzymatic activity but is non-toxic. Displays low binding affinity and enzymatic activity on phosphatidylserine-containing vesicles and HEK-293 plasma membranes, in contrast to ammodytoxins that have high activity on these phospholipids. PLA2 catalyzes the calcium-dependent hydrolysis of the 2-acyl groups in 3-sn-phosphoglycerides. This is Neutral phospholipase A2 ammodytin I2 from Vipera ammodytes ammodytes (Western sand viper).